The primary structure comprises 463 residues: MTTESNAYRGLAWVAAMALFMQSLDATILNTALPAISSDLHKPAFEMQMAIIAYSLAVALFIPLTAWAAAKFGTLTVFRSAVFTFILGSVACAAASNLESLILARVIQGIGGAFMMPVARLAIIQAVPKQQLVNAWNLMATAGLIGPILGPILGGWLVIHASWHWIFLINIPIGALGILASGSVMNNIKGKAEKLDWTGFLLFALGLVGITLGLDLLGESQHNSSVTYSILVVGILLLVTYCGYAKNNENAILPLSLFRTRTFRLGIIANIFIRLSASGVPFLLPLMFQLSFGYSAEMSGWLLAPIALISVMLKILIGRILNRWGYKTTLISSALLMAGSVISMAWLDKQSSLTWIICNLMWYGACMSIIFTSINTLAVGDLSKQQSGTGSTVLSIVQQVGIGFGIAVSSIILNLYRHFFSASDCLPQAFSYTFLTSSLFVIALVWSLMKLHKHDGDHLRKMP.

14 helical membrane passes run 10 to 30, 49 to 69, 82 to 102, 107 to 127, 139 to 159, 165 to 185, 197 to 217, 225 to 245, 267 to 287, 298 to 318, 328 to 348, 354 to 374, 393 to 413, and 429 to 449; these read GLAW…TILN, MAII…AWAA, VFTF…ESLI, IQGI…IQAV, MATA…WLVI, WIFL…GSVM, WTGF…LDLL, SVTY…CGYA, IIAN…LPLM, MSGW…ILIG, TTLI…AWLD, TWII…FTSI, VLSI…SIIL, and AFSY…WSLM.

Belongs to the major facilitator superfamily. EmrB family.

The protein resides in the cell inner membrane. This chain is Probable transport protein HsrA (hsrA), found in Haemophilus influenzae (strain ATCC 51907 / DSM 11121 / KW20 / Rd).